We begin with the raw amino-acid sequence, 199 residues long: MKSLTAVCQTGASGMPALNASGRIQRHPTHRGDGENAEMKMYLSKLKDLVPFMPKNRKLTKLEIIQHVIDYICDLQTELETHPEMGNFDAAAALTAVNGLHEDEDSDMEDADAEAEAEVDPDILAQRLNAEQPAKVSSPAARLPLTDRQTPNTLVAPAHPQQHQQQQQLQLQQQQLQSQQQLSNSLATPQNAEKDSRQS.

The 53-residue stretch at 23-75 folds into the bHLH domain; the sequence is RIQRHPTHRGDGENAEMKMYLSKLKDLVPFMPKNRKLTKLEIIQHVIDYICDL. Serine 106 carries the post-translational modification Phosphoserine. Residues 127–199 form a disordered region; that stretch reads RLNAEQPAKV…QNAEKDSRQS (73 aa). Low complexity predominate over residues 161–182; it reads QQHQQQQQLQLQQQQLQSQQQL.

As to quaternary structure, heterodimer with other HLH proteins.

The protein resides in the nucleus. In terms of biological role, participates in sensory organ patterning by antagonizing the neurogenic activity of the Achaete-scute complex (AS-C). It lacks a basic DNA-binding domain but is able to form heterodimers with other HLH proteins, thereby inhibiting DNA binding. May sequester proneural proteins in complexes inefficient for DNA interaction. EMC also affects vein differentiation. Inhibits the activity of AS-C proteins by forming an non-DNA binding heterodimer. The protein is Protein extra-macrochaetae (emc) of Drosophila melanogaster (Fruit fly).